Here is a 249-residue protein sequence, read N- to C-terminus: Ubiquinone biosynthesis protein COQ4 homolog, mitochondrial (249 aa).

Residues His-134, Asp-135, His-138, and Glu-150 each contribute to the Zn(2+) site.

This sequence belongs to the COQ4 family. Component of a multi-subunit COQ enzyme complex. Requires Zn(2+) as cofactor.

The protein localises to the mitochondrion inner membrane. It carries out the reaction a 4-hydroxy-3-methoxy-5-(all-trans-polyprenyl)benzoate + H(+) = a 2-methoxy-6-(all-trans-polyprenyl)phenol + CO2. It functions in the pathway cofactor biosynthesis; ubiquinone biosynthesis. In terms of biological role, lyase that catalyzes the C1-decarboxylation of 4-hydroxy-3-methoxy-5-(all-trans-polyprenyl)benzoic acid into 2-methoxy-6-(all-trans-polyprenyl)phenol during ubiquinone biosynthesis. This is Ubiquinone biosynthesis protein COQ4 homolog, mitochondrial from Trypanosoma brucei brucei (strain 927/4 GUTat10.1).